The chain runs to 262 residues: 4-hydroxy-2-oxo-heptane-1,7-dioate aldolase (262 aa).

His-45 acts as the Proton acceptor in catalysis. Gln-147 serves as a coordination point for substrate. Glu-149 lines the a divalent metal cation pocket. The substrate site is built by Ala-174 and Asp-175. Asp-175 serves as a coordination point for a divalent metal cation.

Belongs to the HpcH/HpaI aldolase family. Homohexamer; trimer of dimers. It depends on a divalent metal cation as a cofactor.

It catalyses the reaction 4-hydroxy-2-oxoheptanedioate = succinate semialdehyde + pyruvate. It participates in aromatic compound metabolism; 4-hydroxyphenylacetate degradation; pyruvate and succinate semialdehyde from 4-hydroxyphenylacetate: step 7/7. In terms of biological role, catalyzes the reversible retro-aldol cleavage of 4-hydroxy-2-ketoheptane-1,7-dioate (HKHD) to pyruvate and succinic semialdehyde. The polypeptide is 4-hydroxy-2-oxo-heptane-1,7-dioate aldolase (Shigella boydii serotype 18 (strain CDC 3083-94 / BS512)).